The sequence spans 310 residues: Beta-ketoacyl-[acyl-carrier-protein] synthase III 1 (310 aa).

Catalysis depends on residues Cys-112 and His-235. The segment at 236–240 (QANIR) is ACP-binding. Residue Asn-265 is part of the active site.

This sequence belongs to the thiolase-like superfamily. FabH family. As to quaternary structure, homodimer.

It localises to the cytoplasm. It carries out the reaction malonyl-[ACP] + acetyl-CoA + H(+) = 3-oxobutanoyl-[ACP] + CO2 + CoA. The protein operates within lipid metabolism; fatty acid biosynthesis. Functionally, catalyzes the condensation reaction of fatty acid synthesis by the addition to an acyl acceptor of two carbons from malonyl-ACP. Catalyzes the first condensation reaction which initiates fatty acid synthesis and may therefore play a role in governing the total rate of fatty acid production. Possesses both acetoacetyl-ACP synthase and acetyl transacylase activities. Its substrate specificity determines the biosynthesis of branched-chain and/or straight-chain of fatty acids. The protein is Beta-ketoacyl-[acyl-carrier-protein] synthase III 1 of Bacillus anthracis.